We begin with the raw amino-acid sequence, 50 residues long: Conotoxin Bu13 (50 aa).

Residue alanine 1 is a signal peptide. Residues 2–24 (EDSRGTQLHRALRKTTKLSLSIR) constitute a propeptide that is removed on maturation. Intrachain disulfides connect cysteine 25–cysteine 40, cysteine 32–cysteine 44, and cysteine 39–cysteine 49.

It belongs to the conotoxin O1 superfamily. Expressed by the venom duct.

It is found in the secreted. This Conus bullatus (Bubble cone) protein is Conotoxin Bu13.